Reading from the N-terminus, the 92-residue chain is Small ribosomal subunit protein uS19 (92 aa).

It belongs to the universal ribosomal protein uS19 family.

Its function is as follows. Protein S19 forms a complex with S13 that binds strongly to the 16S ribosomal RNA. This is Small ribosomal subunit protein uS19 from Bifidobacterium longum subsp. infantis (strain ATCC 15697 / DSM 20088 / JCM 1222 / NCTC 11817 / S12).